Reading from the N-terminus, the 123-residue chain is Large ribosomal subunit protein uL14 (123 aa).

The protein belongs to the universal ribosomal protein uL14 family. In terms of assembly, part of the 50S ribosomal subunit. Forms a cluster with proteins L3 and L19. In the 70S ribosome, L14 and L19 interact and together make contacts with the 16S rRNA in bridges B5 and B8.

Functionally, binds to 23S rRNA. Forms part of two intersubunit bridges in the 70S ribosome. In Photorhabdus laumondii subsp. laumondii (strain DSM 15139 / CIP 105565 / TT01) (Photorhabdus luminescens subsp. laumondii), this protein is Large ribosomal subunit protein uL14.